The chain runs to 503 residues: MEEFQGYLELYRSQQHDFLYPLIFREYIYALAHDRGLNRSVLLDNVGYDKKSSLLIIKRLISRMYQQNHFIISVNDSNQNKFFGYNKNLYSQMISEGFAVIVEIPFSLRLVSSLEETETVKSYNLRSIHSIFPFFEDKFPHLNYASDVLIPYPIHLEILVQTLRYCVKDPSSLHLLRLFLHEYYNWNTLITPKKSIFAKSNQRLFLLLYNSYVCEYESILLFLRNQSNHLRLTSSGILFERIRFYEKIKYPVEEVFANDFPATLWFFKDPFIQYVRYQGKSILASKDTPLLMNKWKYYLVHFWQCHFYVWSQPGRIHINQLSKHSFDFLGYLSSIRPNISVVRSQLLENSFLMDNAMKKLDTLFPIIPMIGSLAKVKFCNTSGHPISKSSWADSSDSDIIDRFVRIGGNLSHYYSGSSKKKSLYRIKYILRLSCVKTLARKHKSTVRTFLKRLGPKLLDEFFTEEEQIFSLLFPRTSSTLKRFYRGRIWYLDILCINDLVNHE.

Belongs to the intron maturase 2 family. MatK subfamily.

Its subcellular location is the plastid. The protein localises to the chloroplast. Usually encoded in the trnK tRNA gene intron. Probably assists in splicing its own and other chloroplast group II introns. This Rosa canina (Dog rose) protein is Maturase K.